Consider the following 494-residue polypeptide: Sugiol synthase (494 aa).

The helical transmembrane segment at 3–23 (SFSLLAALFFISAATWFISSR) threads the bilayer. Cys-437 is a heme binding site.

It belongs to the cytochrome P450 family. The cofactor is heme. As to expression, expressed in roots.

The protein resides in the membrane. The enzyme catalyses ferruginol + 2 reduced [NADPH--hemoprotein reductase] + 2 O2 = sugiol + 2 oxidized [NADPH--hemoprotein reductase] + 3 H2O + 2 H(+). The catalysed reaction is ferruginol + reduced [NADPH--hemoprotein reductase] + O2 = 11-hydroxyferruginol + oxidized [NADPH--hemoprotein reductase] + H2O + H(+). It catalyses the reaction 11-hydroxyferruginol + 2 reduced [NADPH--hemoprotein reductase] + 2 O2 = 11-hydroxysugiol + 2 oxidized [NADPH--hemoprotein reductase] + 3 H2O + 2 H(+). The protein operates within secondary metabolite biosynthesis; terpenoid biosynthesis. Its function is as follows. Monooxygenase that oxidizes ferruginol to produce sugiol. Oxidizes ferruginol at C-12 to produce 11-hydroxyferruginol. Can oxidize 11-hydroxyferruginol to 11-hydroxysugiol. These products are intermediates in tanshinone biosynthesis. The chain is Sugiol synthase from Salvia miltiorrhiza (Chinese sage).